A 1386-amino-acid chain; its full sequence is Rab3 GTPase-activating protein non-catalytic subunit (1386 aa).

Residues Gly31–Gln69 are disordered. Position 38 is a phosphoserine (Ser38). The span at Trp43–Gly63 shows a compositional bias: acidic residues. A Phosphoserine modification is found at Ser448. Thr899 carries the phosphothreonine modification. Residue Ser914 is modified to Phosphoserine. A compositionally biased stretch (basic and acidic residues) spans Arg959–Ile973. Residues Arg959–Glu982 are disordered. Phosphoserine is present on Ser976.

It belongs to the Rab3-GAP regulatory subunit family. In terms of assembly, the Rab3 GTPase-activating complex is a heterodimer composed of Rab3gap1 and Rab3gap2. The Rab3 GTPase-activating complex interacts with DMXL2. Interacts with LMAN1.

The protein resides in the cytoplasm. The protein localises to the endoplasmic reticulum. Regulatory subunit of the Rab3 GTPase-activating (Rab3GAP) complex composed of RAB3GAP1 and RAB3GAP2, which has GTPase-activating protein (GAP) activity towards various Rab3 subfamily members (RAB3A, RAB3B, RAB3C and RAB3D), RAB5A and RAB43, and guanine nucleotide exchange factor (GEF) activity towards RAB18. As part of the Rab3GAP complex, acts as a GAP for Rab3 proteins by converting active RAB3-GTP to the inactive form RAB3-GDP. Rab3 proteins are involved in regulated exocytosis of neurotransmitters and hormones. The Rab3GAP complex acts as a GEF for RAB18 by promoting the conversion of inactive RAB18-GDP to the active form RAB18-GTP. Recruits and stabilizes RAB18 at the cis-Golgi membrane in fibroblasts where RAB18 is most likely activated. Also involved in RAB18 recruitment at the endoplasmic reticulum (ER) membrane where it maintains proper ER structure. Required for normal eye and brain development. May participate in neurodevelopmental processes such as proliferation, migration and differentiation before synapse formation, and non-synaptic vesicular release of neurotransmitters. This chain is Rab3 GTPase-activating protein non-catalytic subunit, found in Rattus norvegicus (Rat).